The chain runs to 282 residues: Protoheme IX farnesyltransferase (282 aa).

9 helical membrane passes run 9 to 29 (LAKPGIIFGNLITLTGGFLLA), 39 to 59 (LPLFVYVMIGVALMIAAGCVF), 79 to 99 (LVTGDISVIQATIYGTILLIL), 102 to 122 (LVLYYLVNLLTLWIIIIGFIV), 139 to 159 (VLGGISGAIPPVAGYTAVVNI), 165 to 185 (LALFLILFFWQIPHSYAIAML), 210 to 230 (IMLFYLALFVVSCALPAVLGS), 231 to 251 (ADLFSFIVCMLVALFWMYKSI), and 261 to 281 (VFAKTVFKFSIIVITAICLTM).

Belongs to the UbiA prenyltransferase family. Protoheme IX farnesyltransferase subfamily.

The protein resides in the cell inner membrane. The enzyme catalyses heme b + (2E,6E)-farnesyl diphosphate + H2O = Fe(II)-heme o + diphosphate. It participates in porphyrin-containing compound metabolism; heme O biosynthesis; heme O from protoheme: step 1/1. Functionally, converts heme B (protoheme IX) to heme O by substitution of the vinyl group on carbon 2 of heme B porphyrin ring with a hydroxyethyl farnesyl side group. This is Protoheme IX farnesyltransferase from Francisella tularensis subsp. novicida (strain U112).